Reading from the N-terminus, the 445-residue chain is Solute carrier family 52, riboflavin transporter, member 2 (445 aa).

Helical transmembrane passes span 14–34, 47–67, 86–106, 112–132, 147–167, and 196–216; these read LLVA…WVEL, LPSY…VVTL, VLGM…APVA, VAFL…NVTF, FFLG…VQGV, and FFWA…GLLL. Residues 228-264 are disordered; it reads ELGSGLQVGAPGAEEEVEESSPLQEPPSQAAGTTPGP. The span at 247–258 shows a compositional bias: low complexity; the sequence is SSPLQEPPSQAA. The next 5 membrane-spanning stretches (helical) occupy residues 277–297, 312–332, 339–359, 366–386, and 404–424; these read ACLL…LPAV, LAVV…MGVL, LGGL…LAVL, VGTS…LGVF, and ALLA…VAMF.

This sequence belongs to the riboflavin transporter family. As to expression, highly expressed in brain, fetal brain and salivary gland. Weakly expressed in other tissues.

The protein localises to the cell membrane. The enzyme catalyses riboflavin(in) = riboflavin(out). With respect to regulation, riboflavin transport is Na(+)-independent but moderately pH-sensitive. Activity is strongly inhibited by riboflavin analogs, such as lumiflavin. Weakly inhibited by flavin adenine dinucleotide (FAD) and flavin mononucleotide (FMN). In terms of biological role, plasma membrane transporter mediating the uptake by cells of the water soluble vitamin B2/riboflavin that plays a key role in biochemical oxidation-reduction reactions of the carbohydrate, lipid, and amino acid metabolism. Humans are unable to synthesize vitamin B2/riboflavin and must obtain it via intestinal absorption. May also act as a receptor for 4-hydroxybutyrate. Its function is as follows. (Microbial infection) In case of infection by retroviruses, acts as a cell receptor to retroviral envelopes similar to the porcine endogenous retrovirus (PERV-A). In Homo sapiens (Human), this protein is Solute carrier family 52, riboflavin transporter, member 2 (SLC52A2).